Here is a 314-residue protein sequence, read N- to C-terminus: Ribosomal RNA small subunit methyltransferase H (314 aa).

S-adenosyl-L-methionine is bound by residues 58-60 (GGH), Asp-76, Phe-103, Asp-119, and Gln-126.

Belongs to the methyltransferase superfamily. RsmH family.

Its subcellular location is the cytoplasm. It catalyses the reaction cytidine(1402) in 16S rRNA + S-adenosyl-L-methionine = N(4)-methylcytidine(1402) in 16S rRNA + S-adenosyl-L-homocysteine + H(+). Functionally, specifically methylates the N4 position of cytidine in position 1402 (C1402) of 16S rRNA. In Gloeobacter violaceus (strain ATCC 29082 / PCC 7421), this protein is Ribosomal RNA small subunit methyltransferase H.